Reading from the N-terminus, the 134-residue chain is Small ribosomal subunit protein uS12 (134 aa).

Asp89 bears the 3-methylthioaspartic acid mark. The interval 101–134 is disordered; it reads TLDASGVNGRNQSRSKYGTKRPKPGQAAAGGKKK. Residues 125 to 134 show a composition bias toward low complexity; that stretch reads GQAAAGGKKK.

Belongs to the universal ribosomal protein uS12 family. As to quaternary structure, part of the 30S ribosomal subunit. Contacts proteins S8 and S17. May interact with IF1 in the 30S initiation complex.

Functionally, with S4 and S5 plays an important role in translational accuracy. Its function is as follows. Interacts with and stabilizes bases of the 16S rRNA that are involved in tRNA selection in the A site and with the mRNA backbone. Located at the interface of the 30S and 50S subunits, it traverses the body of the 30S subunit contacting proteins on the other side and probably holding the rRNA structure together. The combined cluster of proteins S8, S12 and S17 appears to hold together the shoulder and platform of the 30S subunit. The chain is Small ribosomal subunit protein uS12 from Gemmatimonas aurantiaca (strain DSM 14586 / JCM 11422 / NBRC 100505 / T-27).